The sequence spans 258 residues: Imidazole glycerol phosphate synthase subunit HisF (258 aa).

Active-site residues include aspartate 11 and aspartate 130.

The protein belongs to the HisA/HisF family. As to quaternary structure, heterodimer of HisH and HisF.

Its subcellular location is the cytoplasm. It carries out the reaction 5-[(5-phospho-1-deoxy-D-ribulos-1-ylimino)methylamino]-1-(5-phospho-beta-D-ribosyl)imidazole-4-carboxamide + L-glutamine = D-erythro-1-(imidazol-4-yl)glycerol 3-phosphate + 5-amino-1-(5-phospho-beta-D-ribosyl)imidazole-4-carboxamide + L-glutamate + H(+). It functions in the pathway amino-acid biosynthesis; L-histidine biosynthesis; L-histidine from 5-phospho-alpha-D-ribose 1-diphosphate: step 5/9. Its function is as follows. IGPS catalyzes the conversion of PRFAR and glutamine to IGP, AICAR and glutamate. The HisF subunit catalyzes the cyclization activity that produces IGP and AICAR from PRFAR using the ammonia provided by the HisH subunit. This chain is Imidazole glycerol phosphate synthase subunit HisF, found in Xanthomonas campestris pv. campestris (strain 8004).